An 85-amino-acid chain; its full sequence is Large ribosomal subunit protein bL27 (85 aa).

Residues 1–10 (MAQKKGGGST) show a composition bias toward gly residues. The disordered stretch occupies residues 1–21 (MAQKKGGGSTRNGRDSQPKML).

The protein belongs to the bacterial ribosomal protein bL27 family.

In Polaromonas naphthalenivorans (strain CJ2), this protein is Large ribosomal subunit protein bL27.